The following is a 195-amino-acid chain: MDINKLINMFAKLPNFGPSSSRRIVLHLLRNKEEVMLPLASGIQDLAFQTKECSVCFNIDVKSPCSICSDTKRDHQLLCIVEELGDLWAFEKGKIYQGVYHVLGGTLSAIYGIGPDQLNLDNIVERIKKFDIKEVIIGIGNTMDGQVTTHYITQIVKGLGIKITRLACGIPMGGEIDYLDEGTLSAALSSRYVIS.

A C4-type zinc finger spans residues 53–68 (CSVCFNIDVKSPCSIC). The 96-residue stretch at 76–171 (QLLCIVEELG…KITRLACGIP (96 aa)) folds into the Toprim domain.

It belongs to the RecR family.

Its function is as follows. May play a role in DNA repair. It seems to be involved in an RecBC-independent recombinational process of DNA repair. It may act with RecF and RecO. The chain is Recombination protein RecR from Ehrlichia canis (strain Jake).